We begin with the raw amino-acid sequence, 226 residues long: 6-carboxyhexanoate--CoA ligase (226 aa).

The protein belongs to the BioW family. In terms of assembly, homodimer. It depends on Mg(2+) as a cofactor.

The enzyme catalyses heptanedioate + ATP + CoA = 6-carboxyhexanoyl-CoA + AMP + diphosphate. It participates in metabolic intermediate metabolism; pimeloyl-CoA biosynthesis; pimeloyl-CoA from pimelate: step 1/1. Its function is as follows. Catalyzes the transformation of pimelate into pimeloyl-CoA with concomitant hydrolysis of ATP to AMP. The sequence is that of 6-carboxyhexanoate--CoA ligase from Methanocaldococcus infernus (strain DSM 11812 / JCM 15783 / ME).